Reading from the N-terminus, the 284-residue chain is Tropomyosin (284 aa).

A coiled-coil region spans residues 1 to 273 (MDAIKKKMLA…KEKYKAISDE (273 aa)).

The protein belongs to the tropomyosin family. As to quaternary structure, homodimer.

Functionally, tropomyosin, in association with the troponin complex, plays a central role in the calcium dependent regulation of muscle contraction. The polypeptide is Tropomyosin (Haliotis diversicolor (Abalone)).